We begin with the raw amino-acid sequence, 500 residues long: MVILTGRSLTLDDMEAILYKGVKVGLSQSCINEIEASRRAVEKIVQDGRTVYGINTGFGKFSDVQIAAADTEELQRNLILSHACGVGGYFSDEISQAMMVLRANALAKGFSGVRLEVVEMLLELINKDIYPCIPSQGSLGASGDLAPLSHLALVLIGEGEVRYRGECMSTASCFAKLGIQPLTLQAKEGLALINGTQAMTAVGVVAYLEAEKLAYQGEQIAAVTMEGLQGIIDAFDQAVHVARGYQEQIDVAARMRHLLQGSKLTTKQGEKRVQDAYSLRCIPQVHGAVWQALGYVKDKLLIEMNAATDNPLLFDEGEKVISGGNFHGEPIAFAMDFLCIAMAELGNIAERRVERLVNPQLNDLPPFLSPAPGLQSGAMIMQYVAASLVSENKTLAHPASVDSIPSSANQEDHVSMGTIAARHALQIVENVRRICAIEAICALQAVEYRGIAAMAPATKTFFVEARRVVPTITADRVFAKDIEAMAQWLRNGGKAAAVLS.

Residues 141 to 143 (ASG) constitute a cross-link (5-imidazolinone (Ala-Gly)). Ser-142 is modified (2,3-didehydroalanine (Ser)).

This sequence belongs to the PAL/histidase family. Contains an active site 4-methylidene-imidazol-5-one (MIO), which is formed autocatalytically by cyclization and dehydration of residues Ala-Ser-Gly.

The protein resides in the cytoplasm. It carries out the reaction L-histidine = trans-urocanate + NH4(+). The protein operates within amino-acid degradation; L-histidine degradation into L-glutamate; N-formimidoyl-L-glutamate from L-histidine: step 1/3. The sequence is that of Histidine ammonia-lyase from Shouchella clausii (strain KSM-K16) (Alkalihalobacillus clausii).